Consider the following 411-residue polypeptide: Mitotic apparatus protein p62 (411 aa).

Composition is skewed to acidic residues over residues 134-156 (AYEV…EEEE), 183-201 (ELDE…EEEI), and 246-321 (DDDE…EEDS). The disordered stretch occupies residues 134–378 (AYEVGDEDLE…KSPSKPKKEE (245 aa)). Residues 351–367 (GMKEKKTYSLEDMKQDL) show a composition bias toward basic and acidic residues.

This sequence belongs to the nucleoplasmin family. Post-translationally, phosphorylated by CaM-kinase II in vitro.

The protein localises to the nucleus. Functionally, required for mitotic progression. Binds to chromatin. This chain is Mitotic apparatus protein p62, found in Lytechinus pictus (Painted sea urchin).